A 1093-amino-acid chain; its full sequence is Electroneutral sodium bicarbonate exchanger 1 (1093 aa).

2 disordered regions span residues M1 to D25 and P55 to P95. Residues M1–C478 are Extracellular-facing. Residues Q59–G77 are compositionally biased toward basic residues. The Zn(2+) site is built by F167 and L169. Residues L340–L344 carry the VTVLP; mediates dimerization motif. A helical transmembrane segment spans residues L479–L499. The Cytoplasmic segment spans residues L500–A523. The chain crosses the membrane as a helical span at residues Y524–F544. The Extracellular segment spans residues E545–C565. A helical transmembrane segment spans residues I566–V586. The Cytoplasmic segment spans residues C587 to E595. A helical membrane pass occupies residues A596 to L616. Residues A617–H687 lie on the Extracellular side of the membrane. Disulfide bonds link C636/C684 and C638/C672. An N-linked (GlcNAc) asparagine glycan is attached at N646. Residues G688–L708 form a helical membrane-spanning segment. At S709–D731 the chain is on the cytoplasmic side. The chain crosses the membrane as a helical span at residues F732 to S752. The Extracellular segment spans residues P753 to N778. A helical membrane pass occupies residues P779–M799. The Cytoplasmic segment spans residues D800 to D824. Residues L825–A845 traverse the membrane as a helical segment. Over A846–T881 the chain is Extracellular. A helical membrane pass occupies residues G882 to I902. Topologically, residues P903–M904 are cytoplasmic. The chain crosses the membrane as a helical span at residues P905–F925. Topologically, residues D926–C962 are extracellular. Residues L963–L983 traverse the membrane as a helical segment. Over A984–N1093 the chain is Cytoplasmic. The stretch at E1010–G1036 forms a coiled coil.

This sequence belongs to the anion exchanger (TC 2.A.31) family. Homodimer. As to expression, expressed in the pyramidal cells of the hippocampus (at protein level). Highly expressed in all major regions of the brain, spinal column and in testis, and moderate levels in trachea, thyroid and medulla region of kidney. Low expression levels observed in pancreas and kidney cortex. In terms of tissue distribution, expressed in the brain. Expressed in the brain, heart and kidney.

It is found in the apical cell membrane. The protein resides in the basolateral cell membrane. It localises to the cytoplasmic vesicle. Its subcellular location is the secretory vesicle. The protein localises to the synaptic vesicle membrane. It is found in the cell membrane. The catalysed reaction is 2 hydrogencarbonate(out) + chloride(in) + Na(+)(out) = 2 hydrogencarbonate(in) + chloride(out) + Na(+)(in). Its activity is regulated as follows. Activity is inhibited by 4,4'-Di-isothiocyanatostilbene-2,2'-disulfonic acid (DIDS - an inhibitor of several anion channels and transporters). Activity is inhibited by 4,4'-Di-isothiocyanatostilbene-2,2'-disulfonic acid (DIDS - an inhibitor of several anion channels and transporters). Zinc-binding negatively regulates its activity. Mediates electroneutral sodium- and carbonate-dependent chloride-HCO3(-) exchange with a Na(+):HCO3(-) stoichiometry of 2:1. Plays a major role in pH regulation in neurons. Mediates sodium reabsorption in the renal cortical collecting ducts. The polypeptide is Electroneutral sodium bicarbonate exchanger 1 (Homo sapiens (Human)).